A 304-amino-acid polypeptide reads, in one-letter code: Pyridoxal 5'-phosphate synthase subunit pyroA (304 aa).

Residue Asp-28 participates in D-ribose 5-phosphate binding. The active-site Schiff-base intermediate with D-ribose 5-phosphate is Lys-85. Residue Gly-157 participates in D-ribose 5-phosphate binding. Arg-169 is a D-glyceraldehyde 3-phosphate binding site. Residues Gly-224 and 245–246 (GS) each bind D-ribose 5-phosphate.

The protein belongs to the PdxS/SNZ family.

The enzyme catalyses aldehydo-D-ribose 5-phosphate + D-glyceraldehyde 3-phosphate + L-glutamine = pyridoxal 5'-phosphate + L-glutamate + phosphate + 3 H2O + H(+). Its pathway is cofactor biosynthesis; pyridoxal 5'-phosphate biosynthesis. Catalyzes the formation of pyridoxal 5'-phosphate from ribose 5-phosphate (RBP), glyceraldehyde 3-phosphate (G3P) and ammonia. The ammonia is provided by PDX2. Can also use ribulose 5-phosphate and dihydroxyacetone phosphate as substrates, resulting from enzyme-catalyzed isomerization of RBP and G3P, respectively. Also plays an indirect role in resistance to singlet oxygen-generating photosensitizers. This chain is Pyridoxal 5'-phosphate synthase subunit pyroA (pyroA), found in Emericella nidulans (strain FGSC A4 / ATCC 38163 / CBS 112.46 / NRRL 194 / M139) (Aspergillus nidulans).